The following is a 199-amino-acid chain: N-(5'-phosphoribosyl)anthranilate isomerase (199 aa).

This sequence belongs to the TrpF family.

It carries out the reaction N-(5-phospho-beta-D-ribosyl)anthranilate = 1-(2-carboxyphenylamino)-1-deoxy-D-ribulose 5-phosphate. Its pathway is amino-acid biosynthesis; L-tryptophan biosynthesis; L-tryptophan from chorismate: step 3/5. The protein is N-(5'-phosphoribosyl)anthranilate isomerase of Streptococcus pneumoniae (strain ATCC BAA-255 / R6).